The primary structure comprises 327 residues: Aspartate carbamoyltransferase catalytic subunit (327 aa).

The carbamoyl phosphate site is built by Arg-67 and Thr-68. Lys-95 contributes to the L-aspartate binding site. Carbamoyl phosphate-binding residues include Arg-117, His-145, and Gln-148. Positions 178 and 232 each coordinate L-aspartate. 2 residues coordinate carbamoyl phosphate: Gly-273 and Pro-274.

This sequence belongs to the aspartate/ornithine carbamoyltransferase superfamily. ATCase family. In terms of assembly, heterododecamer (2C3:3R2) of six catalytic PyrB chains organized as two trimers (C3), and six regulatory PyrI chains organized as three dimers (R2).

The catalysed reaction is carbamoyl phosphate + L-aspartate = N-carbamoyl-L-aspartate + phosphate + H(+). It functions in the pathway pyrimidine metabolism; UMP biosynthesis via de novo pathway; (S)-dihydroorotate from bicarbonate: step 2/3. Its function is as follows. Catalyzes the condensation of carbamoyl phosphate and aspartate to form carbamoyl aspartate and inorganic phosphate, the committed step in the de novo pyrimidine nucleotide biosynthesis pathway. This is Aspartate carbamoyltransferase catalytic subunit from Parvibaculum lavamentivorans (strain DS-1 / DSM 13023 / NCIMB 13966).